The sequence spans 2211 residues: Nonribosomal peptide synthetase 13 (2211 aa).

Residues 76–475 form an adenylation 1 region; it reads TYAELDSLSD…IEHHLQLTLP (400 aa). In terms of domain architecture, Carrier 1 spans 594-671; that stretch reads PPSTPKEATI…EQSKRAGLIQ (78 aa). Ser631 is subject to O-(pantetheine 4'-phosphoryl)serine. Positions 710–975 are condensation 1; sequence EDIYPCTALQ…IATVPTRIRV (266 aa). The interval 1169-1563 is adenylation 2; that stretch reads TYRELWAHSS…LGAVEASVMR (395 aa). In terms of domain architecture, Carrier 2 spans 1677–1756; that stretch reads PMSDDNERRL…RSRHLITEQA (80 aa). Ser1714 is modified (O-(pantetheine 4'-phosphoryl)serine). Residues 1814–2069 form a condensation 2 region; sequence HFQFDLSGAV…CTNYIPYRLS (256 aa).

Belongs to the NRP synthetase family.

It carries out the reaction L-proline + L-tryptophan + 2 ATP = brevianamide F + 2 AMP + 2 diphosphate + 2 H(+). The protein operates within mycotoxin biosynthesis. In terms of biological role, nonribosomal peptide synthetase; part of the gene cluster that mediates the biosynthesis of fumitremorgins, indole alkaloids that carry not only intriguing chemical structures, but also interesting biological and pharmacological activities. The biosynthesis of fumitremorgin-type alkaloids begins by condensation of the two amino acids L-tryptophan and L-proline to brevianamide F, catalyzed by the non-ribosomal peptide synthetase ftmA. Brevianamide F is then prenylated by the prenyltransferase ftmPT1/ftmB in the presence of dimethylallyl diphosphate, resulting in the formation of tryprostatin B. The three cytochrome P450 monooxygenases, ftmP450-1/ftmC, ftmP450-2/ftmE and ftmP450-3/FtmG, are responsible for the conversion of tryprostatin B to 6-hydroxytryprostatin B, tryprostatin A to fumitremorgin C and fumitremorgin C to 12,13-dihydroxyfumitremorgin C, respectively. The putative methyltransferase ftmMT/ftmD is expected for the conversion of 6-hydroxytryprostatin B to tryprostatin A. FtmPT2/FtmH catalyzes the prenylation of 12,13-dihydroxyfumitre-morgin C in the presence of dimethylallyl diphosphate, resulting in the formation of fumitremorgin B. Fumitremorgin B is further converted to verruculogen by ftmOx1/ftmF via the insertion of an endoperoxide bond between the two prenyl moieties. In some fungal species, verruculogen is further converted to fumitremorgin A, but the enzymes involved in this step have not been identified yet. In Aspergillus fumigatus (strain ATCC MYA-4609 / CBS 101355 / FGSC A1100 / Af293) (Neosartorya fumigata), this protein is Nonribosomal peptide synthetase 13.